The chain runs to 95 residues: Putative pterin-4-alpha-carbinolamine dehydratase (95 aa).

This sequence belongs to the pterin-4-alpha-carbinolamine dehydratase family.

The enzyme catalyses (4aS,6R)-4a-hydroxy-L-erythro-5,6,7,8-tetrahydrobiopterin = (6R)-L-erythro-6,7-dihydrobiopterin + H2O. In Thermosynechococcus vestitus (strain NIES-2133 / IAM M-273 / BP-1), this protein is Putative pterin-4-alpha-carbinolamine dehydratase.